The primary structure comprises 1035 residues: Glycine dehydrogenase (decarboxylating), mitochondrial (1035 aa).

The N-terminal 64 residues, 1-64 (MERARKLANR…KSFNTQQARS (64 aa)), are a transit peptide targeting the mitochondrion. An N6-(pyridoxal phosphate)lysine modification is found at lysine 771.

The protein belongs to the GcvP family. Homodimer. The glycine cleavage system is composed of four proteins: P, T, L and H. Requires pyridoxal 5'-phosphate as cofactor.

It localises to the mitochondrion. The catalysed reaction is N(6)-[(R)-lipoyl]-L-lysyl-[glycine-cleavage complex H protein] + glycine + H(+) = N(6)-[(R)-S(8)-aminomethyldihydrolipoyl]-L-lysyl-[glycine-cleavage complex H protein] + CO2. Functionally, the glycine cleavage system catalyzes the degradation of glycine. The P protein binds the alpha-amino group of glycine through its pyridoxal phosphate cofactor; CO(2) is released and the remaining methylamine moiety is then transferred to the lipoamide cofactor of the H protein. The protein is Glycine dehydrogenase (decarboxylating), mitochondrial (GDCSP) of Solanum tuberosum (Potato).